The primary structure comprises 74 residues: Brevinin-2MT1 (74 aa).

Residues 1–22 form the signal peptide; it reads MFTMKKSLLVLFFLGTISLSLC. A propeptide spans 23 to 39 (removed in mature form); that stretch reads EEERNADEDDGEMTEEE. A disulfide bridge links C68 with C74.

The protein belongs to the frog skin active peptide (FSAP) family. Brevinin subfamily. Expressed by the skin glands.

The protein localises to the secreted. In terms of biological role, antimicrobial peptide. Active against a variety of Gram-negative and Gram-positive bacterial strains. Active against fungi. Shows hemolytic activity against human erythrocytes. The protein is Brevinin-2MT1 of Amolops mantzorum (Sichuan torrent frog).